The chain runs to 251 residues: Ubiquinone/menaquinone biosynthesis C-methyltransferase UbiE (251 aa).

Residues Thr-74, Asp-95, 123 to 124 (NA), and Ser-140 contribute to the S-adenosyl-L-methionine site.

This sequence belongs to the class I-like SAM-binding methyltransferase superfamily. MenG/UbiE family.

It catalyses the reaction a 2-demethylmenaquinol + S-adenosyl-L-methionine = a menaquinol + S-adenosyl-L-homocysteine + H(+). The enzyme catalyses a 2-methoxy-6-(all-trans-polyprenyl)benzene-1,4-diol + S-adenosyl-L-methionine = a 5-methoxy-2-methyl-3-(all-trans-polyprenyl)benzene-1,4-diol + S-adenosyl-L-homocysteine + H(+). It participates in quinol/quinone metabolism; menaquinone biosynthesis; menaquinol from 1,4-dihydroxy-2-naphthoate: step 2/2. It functions in the pathway cofactor biosynthesis; ubiquinone biosynthesis. Methyltransferase required for the conversion of demethylmenaquinol (DMKH2) to menaquinol (MKH2) and the conversion of 2-polyprenyl-6-methoxy-1,4-benzoquinol (DDMQH2) to 2-polyprenyl-3-methyl-6-methoxy-1,4-benzoquinol (DMQH2). The polypeptide is Ubiquinone/menaquinone biosynthesis C-methyltransferase UbiE (Yersinia pestis bv. Antiqua (strain Antiqua)).